Reading from the N-terminus, the 384-residue chain is Neuropeptide Y receptor type 2 (384 aa).

The Extracellular segment spans residues 1–54 (MKMGPLGAEADENQTVEEMKVDQFGPGHTTLPGELAPDSEPELIDSTKLIEVQV). N-linked (GlcNAc...) asparagine glycosylation is present at Asn13. The chain crosses the membrane as a helical span at residues 55–75 (VLILAYCSIILLGVIGNSLVI). Residues 76–89 (HVVIKFKSMRTVTN) are Cytoplasmic-facing. A helical transmembrane segment spans residues 90 to 110 (FFIANLAVADLLVNTLCLPFT). The Extracellular portion of the chain corresponds to 111–127 (LTYTLMGEWKMGPVLCH). The cysteines at positions 126 and 206 are disulfide-linked. A helical transmembrane segment spans residues 128–148 (LVPYAQGLAVQVSTITLTVIA). The Cytoplasmic segment spans residues 149-168 (LDRHRCIVYHLESKISKQIS). The chain crosses the membrane as a helical span at residues 169 to 189 (FLIIGLAWGVSALLASPLAIF). Residues 190 to 219 (REYSLIEIIPDFEIVACTEKWPGEEKGIYG) lie on the Extracellular side of the membrane. Residues 220 to 240 (TIYSLSSLLILYVLPLGIISF) traverse the membrane as a helical segment. Residues 241–271 (SYTRIWSKLKNHVSPGAAHDHYHQRRQKTTK) lie on the Cytoplasmic side of the membrane. The helical transmembrane segment at 272–292 (MLVCVVVVFAVSWLPLHAFQL) threads the bilayer. Over 293–307 (AVDIDSHVLDLKEYK) the chain is Extracellular. Residues 308-328 (LIFTVFHIIAMCSTFANPLLY) form a helical membrane-spanning segment. At 329 to 384 (GWMNSNYRKAFLSAFRCEQRLDAIHSEVSVTFKAKKHLQVTKNNGPNDSFTETTNV) the chain is on the cytoplasmic side. The S-palmitoyl cysteine moiety is linked to residue Cys345.

This sequence belongs to the G-protein coupled receptor 1 family.

The protein resides in the cell membrane. Functionally, receptor for neuropeptide Y and peptide YY. The chain is Neuropeptide Y receptor type 2 (NPY2R) from Bos taurus (Bovine).